The primary structure comprises 484 residues: Monocarboxylate transporter 2 (484 aa).

Over 1 to 16 the chain is Cytoplasmic; the sequence is MPSETAVPPPHPIPPD. A helical membrane pass occupies residues 17-37; the sequence is GGWGWVVVGAAFISIGFSYAF. The Extracellular segment spans residues 38-60; sequence PKAVTVFFKDIQQIFQASYSEIA. The chain crosses the membrane as a helical span at residues 61–81; it reads WISSIMLAVMYAGGPISSVLV. Over 82–87 the chain is Cytoplasmic; that stretch reads NNYGSR. A helical membrane pass occupies residues 88 to 108; it reads PVVIIGGLLCCTGMILASFSN. Topologically, residues 109 to 116 are extracellular; that stretch reads SVLELYLT. Residues 117 to 137 traverse the membrane as a helical segment; it reads IGFIGGLGLAFNLQPALTIIG. Residues 138 to 144 are Cytoplasmic-facing; it reads KYFYRRR. The helical transmembrane segment at 145–165 threads the bilayer; sequence PMANGLAMAGSPVFLSSLAPF. The Extracellular portion of the chain corresponds to 166 to 174; it reads NQYLFNSYG. The helical transmembrane segment at 175-195 threads the bilayer; the sequence is WKGSFLILGGIFLHSCVAGCL. At 196–245 the chain is on the cytoplasmic side; sequence MRPVQTSPRKSKSKSKVGSRQDGSMKKASKVSTAEKINRFLDFSLFKHRG. The segment at 201–224 is disordered; that stretch reads TSPRKSKSKSKVGSRQDGSMKKAS. The chain crosses the membrane as a helical span at residues 246–266; sequence FLIYLSGNVIMFLGFFAPIIF. Topologically, residues 267–282 are extracellular; it reads LAPYAKDKGVDEYNAA. The helical transmembrane segment at 283-303 threads the bilayer; it reads LLLSVMAFVDMFARPTGGLIA. Residues 304–311 lie on the Cytoplasmic side of the membrane; sequence NSKLIRPR. Residues 312 to 332 traverse the membrane as a helical segment; that stretch reads IQYFFSFAIVFTGICHLLCPL. The Extracellular segment spans residues 333-337; the sequence is ADTYP. Residues 338 to 358 traverse the membrane as a helical segment; sequence ALVVYSIFFGYGFGSVSSVLF. Over 359–372 the chain is Cytoplasmic; the sequence is ETLMDLVGPARFSS. Residues 373–393 traverse the membrane as a helical segment; sequence AVGLATIVECCPVLLGPPLAG. The Extracellular segment spans residues 394-405; it reads KLVDKTKDYKYM. A helical membrane pass occupies residues 406-426; it reads YIASGTIVVISGIYLFIGNAI. Residues 427–484 lie on the Cytoplasmic side of the membrane; it reads NYRLLAKERKREKARKKKSATHPSRESEALSRSKQDDVSVKVSNPHNSPSDRERESNI. The segment at 437–484 is disordered; it reads REKARKKKSATHPSRESEALSRSKQDDVSVKVSNPHNSPSDRERESNI. 2 stretches are compositionally biased toward basic and acidic residues: residues 449-465 and 475-484; these read PSRE…DDVS and PSDRERESNI.

The protein belongs to the major facilitator superfamily. Monocarboxylate porter (TC 2.A.1.13) family. As to quaternary structure, homodimer. Interacts with GRID2IP. Interacts with EMB; interaction mediates SLC16A7 targeting to the plasma membrane. Interacts with isoform 2 of BSG. Abundant on the surface of hepatocytes. Present on parietal cells of the oxyntic gland of the stomach, on the basolateral surface of epithelial cells in the collecting ducts of the kidney, on sperm tails throughout the epididymis. Expressed in mitochondria-rich skeletal muscle fibers and cardiac myocytes (at protein level).

Its subcellular location is the cell membrane. The protein resides in the basolateral cell membrane. The protein localises to the cytoplasm. It catalyses the reaction pyruvate(out) + H(+)(out) = pyruvate(in) + H(+)(in). It carries out the reaction 3-methyl-2-oxobutanoate(out) + H(+)(out) = 3-methyl-2-oxobutanoate(in) + H(+)(in). The catalysed reaction is (S)-lactate(in) + H(+)(in) = (S)-lactate(out) + H(+)(out). The enzyme catalyses acetoacetate(out) + H(+)(out) = acetoacetate(in) + H(+)(in). It catalyses the reaction (R)-3-hydroxybutanoate(out) + H(+)(out) = (R)-3-hydroxybutanoate(in) + H(+)(in). It carries out the reaction 4-methyl-2-oxopentanoate(out) + H(+)(out) = 4-methyl-2-oxopentanoate(in) + H(+)(in). The catalysed reaction is (S)-3-hydroxybutanoate(out) + H(+)(out) = (S)-3-hydroxybutanoate(in) + H(+)(in). Its activity is regulated as follows. Transport activity exhibits steep dependence on substrate concentration. Substrate concentration sensitivity of SLC16A7 arises from the strong inter-subunit cooperativity of the SLC16A7 dimer during transport. Inhibited by AR-C155858. Proton-coupled monocarboxylate symporter. Catalyzes the rapid transport across the plasma membrane of monocarboxylates such as L-lactate, pyruvate and ketone bodies, acetoacetate, beta-hydroxybutyrate and acetate. Dimerization is functionally required and both subunits work cooperatively in transporting substrate. The chain is Monocarboxylate transporter 2 (SLC16A7) from Mesocricetus auratus (Golden hamster).